Reading from the N-terminus, the 129-residue chain is Thioredoxin-like 3-3 (129 aa).

Residues 1-10 (MEEGEAKKTG) are compositionally biased toward basic and acidic residues. The tract at residues 1-30 (MEEGEAKKTGLEGTGLSLPGSSHGNLRSAG) is disordered. The Thioredoxin domain maps to 7-129 (KKTGLEGTGL…RLHDRLWLHS (123 aa)). Residues 19–30 (PGSSHGNLRSAG) show a composition bias toward polar residues. Catalysis depends on nucleophile residues cysteine 58 and cysteine 61. A disulfide bridge links cysteine 58 with cysteine 61.

The protein belongs to the thioredoxin family.

Its function is as follows. Probable thiol-disulfide oxidoreductase that may participate in various redox reactions. The polypeptide is Thioredoxin-like 3-3 (Oryza sativa subsp. japonica (Rice)).